Consider the following 160-residue polypeptide: Large ribosomal subunit protein uL22c (160 aa).

This sequence belongs to the universal ribosomal protein uL22 family. Part of the 50S ribosomal subunit.

Its subcellular location is the plastid. It localises to the chloroplast. Functionally, this protein binds specifically to 23S rRNA. In terms of biological role, the globular domain of the protein is located near the polypeptide exit tunnel on the outside of the subunit, while an extended beta-hairpin is found that lines the wall of the exit tunnel in the center of the 70S ribosome. The chain is Large ribosomal subunit protein uL22c (rpl22) from Eucalyptus globulus subsp. globulus (Tasmanian blue gum).